The sequence spans 123 residues: Small ribosomal subunit protein uS12 (123 aa).

Aspartate 89 carries the post-translational modification 3-methylthioaspartic acid.

It belongs to the universal ribosomal protein uS12 family. Part of the 30S ribosomal subunit. Contacts proteins S8 and S17. May interact with IF1 in the 30S initiation complex.

Functionally, with S4 and S5 plays an important role in translational accuracy. Interacts with and stabilizes bases of the 16S rRNA that are involved in tRNA selection in the A site and with the mRNA backbone. Located at the interface of the 30S and 50S subunits, it traverses the body of the 30S subunit contacting proteins on the other side and probably holding the rRNA structure together. The combined cluster of proteins S8, S12 and S17 appears to hold together the shoulder and platform of the 30S subunit. The chain is Small ribosomal subunit protein uS12 from Geobacter metallireducens (strain ATCC 53774 / DSM 7210 / GS-15).